We begin with the raw amino-acid sequence, 397 residues long: Decapping and exoribonuclease protein (397 aa).

Substrate is bound by residues Arg58, Glu101, and 131–133 (WRG). Glu192 is a Mg(2+) binding site. Positions 217 and 234 each coordinate substrate. The Mg(2+) site is built by Glu234, Asp236, Glu253, and Leu254. 2 residues coordinate substrate: Lys255 and Gln280. Thr392 is subject to Phosphothreonine. The residue at position 394 (Ser394) is a Phosphoserine.

Belongs to the DXO/Dom3Z family. Mg(2+) is required as a cofactor.

Its subcellular location is the nucleus. The enzyme catalyses a 5'-end triphospho-ribonucleoside in mRNA + H2O = a 5'-end phospho-ribonucleoside in mRNA + diphosphate + H(+). It carries out the reaction a 5'-end NAD(+)-phospho-ribonucleoside in mRNA + H2O = a 5'-end phospho-ribonucleoside in mRNA + NAD(+) + H(+). It catalyses the reaction a 5'-end NAD(+)-phospho-ribonucleoside in snoRNA + H2O = a 5'-end phospho-ribonucleoside in snoRNA + NAD(+) + H(+). The catalysed reaction is a 5'-end (N(7)-methyl 5'-triphosphoguanosine)-ribonucleoside-ribonucleotide in mRNA + H2O = a (N(7)-methyl 5'-triphosphoguanosine)-nucleoside + a 5'-end phospho-ribonucleoside in mRNA + H(+). The enzyme catalyses a 5'-end FAD-phospho-ribonucleoside in mRNA + H2O = a 5'-end phospho-ribonucleoside in mRNA + FAD + H(+). It carries out the reaction a 5'-end CoA-ribonucleoside in mRNA + H2O = 3'-dephospho-CoA + a 5'-end phospho-ribonucleoside in mRNA + H(+). In terms of biological role, decapping enzyme for NAD-capped RNAs: specifically hydrolyzes the nicotinamide adenine dinucleotide (NAD) cap from a subset of RNAs by removing the entire NAD moiety from the 5'-end of an NAD-capped RNA. The NAD-cap is present at the 5'-end of some RNAs and snoRNAs. In contrast to the canonical 5'-end N7 methylguanosine (m7G) cap, the NAD cap promotes mRNA decay. Preferentially acts on NAD-capped transcripts in response to environmental stress. Also acts as a non-canonical decapping enzyme that removes the entire cap structure of m7G capped or incompletely capped RNAs and mediates their subsequent degradation. Specifically degrades pre-mRNAs with a defective 5'-end m7G cap and is part of a pre-mRNA capping quality control. Has decapping activity toward incomplete 5'-end m7G cap mRNAs such as unmethylated 5'-end-capped RNA (cap0), while it has no activity toward 2'-O-ribose methylated m7G cap (cap1). In contrast to canonical decapping enzymes DCP2 and NUDT16, which cleave the cap within the triphosphate linkage, the decapping activity releases the entire cap structure GpppN and a 5'-end monophosphate RNA. Also has 5'-3' exoribonuclease activities: The 5'-end monophosphate RNA is then degraded by the 5'-3' exoribonuclease activity, enabling this enzyme to decap and degrade incompletely capped mRNAs. Also possesses RNA 5'-pyrophosphohydrolase activity by hydrolyzing the 5'-end triphosphate to release pyrophosphates. Exhibits decapping activity towards FAD-capped RNAs. Exhibits decapping activity towards dpCoA-capped RNAs in vitro. The polypeptide is Decapping and exoribonuclease protein (Rattus norvegicus (Rat)).